The primary structure comprises 108 residues: Insertion element IS6110 uncharacterized 12.0 kDa protein (108 aa).

The protein belongs to the transposase 8 family.

This chain is Insertion element IS6110 uncharacterized 12.0 kDa protein, found in Mycobacterium bovis (strain ATCC BAA-935 / AF2122/97).